The primary structure comprises 229 residues: Putative N-acetylmannosamine-6-phosphate 2-epimerase (229 aa).

This sequence belongs to the NanE family.

It carries out the reaction an N-acyl-D-glucosamine 6-phosphate = an N-acyl-D-mannosamine 6-phosphate. It participates in amino-sugar metabolism; N-acetylneuraminate degradation; D-fructose 6-phosphate from N-acetylneuraminate: step 3/5. Functionally, converts N-acetylmannosamine-6-phosphate (ManNAc-6-P) to N-acetylglucosamine-6-phosphate (GlcNAc-6-P). In Salmonella agona (strain SL483), this protein is Putative N-acetylmannosamine-6-phosphate 2-epimerase.